A 363-amino-acid chain; its full sequence is Type-2 angiotensin II receptor (363 aa).

Residues 1 to 45 are Extracellular-facing; sequence MKDNFSFAATSRNITSSRPFDNLNATGTNESAFNCSHKPSDKHLE. N-linked (GlcNAc...) asparagine glycosylation is found at Asn-4, Asn-13, Asn-24, Asn-29, and Asn-34. 2 disulfides stabilise this stretch: Cys-35/Cys-290 and Cys-117/Cys-195. The chain crosses the membrane as a helical span at residues 46–70; sequence AIPVLYYMIFVIGFAVNIVVVSLFC. Over 71 to 80 the chain is Cytoplasmic; sequence CQKGPKKVSS. Residues 81-104 form a helical membrane-spanning segment; it reads IYIFNLALADLLLLATLPLWATYY. Residues Tyr-103 and Tyr-104 each contribute to the angiotensin II site. Residues 105 to 114 are Extracellular-facing; it reads SYRYDWLFGP. A helical membrane pass occupies residues 115-140; the sequence is VMCKVFGSFLTLNMFASIFFITCMSV. Residues 141-159 lie on the Cytoplasmic side of the membrane; that stretch reads DRYQSVIYPFLSQRRNPWQ. Residues 160–181 traverse the membrane as a helical segment; sequence ASYVVPLVWCMACLSSLPTFYF. Arg-182, Tyr-204, and Lys-215 together coordinate angiotensin II. Residues 182–206 are Extracellular-facing; that stretch reads RDVRTIEYLGVNACIMAFPPEKYAQ. The helical transmembrane segment at 207–232 threads the bilayer; it reads WSAGIALMKNILGFIIPLIFIATCYF. Topologically, residues 233-257 are cytoplasmic; sequence GIRKHLLKTNSYGKNRITRDQVLKM. A helical membrane pass occupies residues 258-281; it reads AAAVVLAFIICWLPFHVLTFLDAL. Angiotensin II is bound at residue Asp-279. The Extracellular portion of the chain corresponds to 282 to 294; it reads TWMGIINSCEVIA. The chain crosses the membrane as a helical span at residues 295–320; that stretch reads VIDLALPFAILLGFTNSCVNPFLYCF. Asp-297 provides a ligand contact to angiotensin II. Residues 321 to 363 are Cytoplasmic-facing; that stretch reads VGNRFQQKLRSVFRVPITWLQGKRETMSCRKGSSLREMDTFVS. A helix VIII region spans residues 324–333; that stretch reads RFQQKLRSVF. Position 354 is a phosphoserine; by PKC (Ser-354).

The protein belongs to the G-protein coupled receptor 1 family. In terms of assembly, interacts with MTUS1. As to expression, expressed at highest levels in adrenal gland and uterus.

It localises to the cell membrane. Its function is as follows. Receptor for angiotensin II, a vasoconstricting peptide. Signals primarily via a non-canonical G-protein- and beta-arrestin independent pathways. Cooperates with MTUS1 to inhibit ERK2 activation and cell proliferation. The protein is Type-2 angiotensin II receptor of Mus musculus (Mouse).